The chain runs to 92 residues: Small ribosomal subunit protein uS19 (92 aa).

Belongs to the universal ribosomal protein uS19 family.

Protein S19 forms a complex with S13 that binds strongly to the 16S ribosomal RNA. This Photobacterium profundum (strain SS9) protein is Small ribosomal subunit protein uS19.